Reading from the N-terminus, the 690-residue chain is Protein arginine N-methyltransferase 7 (690 aa).

SAM-dependent MTase PRMT-type domains are found at residues 14-357 (QNSW…YSLW) and 366-690 (TKSV…QKKL).

The protein belongs to the class I-like SAM-binding methyltransferase superfamily. Protein arginine N-methyltransferase family. PRMT7 subfamily.

Essential arginine methyltransferase that can both catalyze the formation of omega-N monomethylarginine (MMA) and symmetrical dimethylarginine (sDMA). Specifically mediates the symmetrical dimethylation of arginine residues in the small nuclear ribonucleoproteins SmD1 and SmD3. The protein is Protein arginine N-methyltransferase 7 (Art7) of Drosophila yakuba (Fruit fly).